The sequence spans 238 residues: N-acetylneuraminic acid outer membrane channel protein NanC (238 aa).

The N-terminal stretch at 1–23 (MKKAKILSGVLLLCFSSPLISQA) is a signal peptide. The Periplasmic portion of the chain corresponds to 24–25 (AT). The hydrophobic stretch at 26-32 (LDVRGGY) threads the membrane. Topologically, residues 33 to 39 (RSGSHAY) are extracellular. The chain crosses the lipid bilayer at residues 40–49 (ETRLKVSEGW). Residues 50–52 (QNG) lie on the Periplasmic side of the membrane. Over 53–61 (WWASMESNT) the chain traverses the membrane. The Extracellular segment spans residues 62–76 (WNTIHDNKKENAALN). The chain crosses the lipid bilayer at residues 77–86 (DVQVEVNYAI). At 87-91 (KLDDQ) the chain is on the periplasmic side. A membrane pass occupies residues 92-102 (WTVRPGMLTHF). The Extracellular segment spans residues 103 to 107 (SSNGT). A transmembrane span lies at residues 108-117 (RYGPYVKLSW). Over 118–122 (DATKD) the chain is Periplasmic. A membrane pass occupies residues 123–132 (LNFGIRYRYD). Topologically, residues 133–151 (WKAYRQQDLSGDMSRDNVH) are extracellular. A transmembrane helix spans residues 152 to 159 (RWDGYVTY). Residues 160-164 (HINSD) lie on the Periplasmic side of the membrane. The chain crosses the lipid bilayer at residues 165-173 (FTFAWQTTL). At 174-190 (YSKQNDYRYANHKKWAT) the chain is on the extracellular side. Over 191-200 (ENAFVLQYHM) the chain traverses the membrane. Over 201 to 203 (TPD) the chain is Periplasmic. A transmembrane span lies at residues 204–212 (ITPYIEYDY). Over 213 to 228 (LDRQGVYNGRDNLSEN) the chain is Extracellular. Positions 229-236 (SYRIGVSF) form a transmembrane segment. Residues 237–238 (KL) are Periplasmic-facing.

It belongs to the oligogalacturonate-specific porin KdgM (TC 1.B.35) family. NanC subfamily. As to quaternary structure, monomer.

The protein localises to the cell outer membrane. It catalyses the reaction N-acetylneuraminate(in) = N-acetylneuraminate(out). In terms of biological role, outer membrane channel protein allowing the entry of N-acetylneuraminic acid (Neu5Ac, the most abundant sialic acid on host cell surfaces) into the bacteria. NanC proteins form high-conductance channels which are open at low membrane potentials and which have a weak anion selectivity. In Escherichia coli O157:H7, this protein is N-acetylneuraminic acid outer membrane channel protein NanC (nanC).